The chain runs to 30 residues: GVIPCGESCVFIPCINKKKCSCKNKVCYRD.

A cross-link (cyclopeptide (Gly-Asp)) is located at residues 1–30 (GVIPCGESCVFIPCINKKKCSCKNKVCYRD). 3 disulfide bridges follow: Cys5–Cys20, Cys9–Cys22, and Cys14–Cys27.

In terms of processing, this is a cyclic peptide. Post-translationally, contains 3 disulfide bonds.

In terms of biological role, probably participates in a plant defense mechanism (Potential). Binds to and induces leakage in phospholipd membranes, particularly ones containing 1-palmitoyl-2-oleophosphatidylethanolamine (POPE). Not active against Gram-negative bacterium E.coli ATCC 25922 or Gram-positive bacterium S.aureus ATCC 25923 up to a concentration of 64 uM. This chain is Cyclotide mech-1, found in Melicytus chathamicus (Chatham Island mahoe).